The following is a 1311-amino-acid chain: Mitogen-activated protein kinase kinase kinase 19 (1311 aa).

Disordered regions lie at residues Pro-85–Asp-119, Pro-250–His-274, Ser-330–Ser-363, Met-396–Met-472, Glu-486–Asn-508, His-576–Phe-607, and Ser-734–Ser-767. Polar residues predominate over residues Pro-250 to Lys-261. Composition is skewed to basic and acidic residues over residues Asn-262–His-274, Ser-330–Gly-345, and Leu-450–Met-464. The span at Ser-734–Asp-748 shows a compositional bias: basic and acidic residues. Residues Trp-1044–Leu-1307 form the Protein kinase domain. ATP is bound by residues Leu-1050–Val-1058 and Lys-1072. Asp-1169 acts as the Proton acceptor in catalysis.

The protein belongs to the protein kinase superfamily. STE Ser/Thr protein kinase family. STE20 subfamily.

The catalysed reaction is L-seryl-[protein] + ATP = O-phospho-L-seryl-[protein] + ADP + H(+). The enzyme catalyses L-threonyl-[protein] + ATP = O-phospho-L-threonyl-[protein] + ADP + H(+). This chain is Mitogen-activated protein kinase kinase kinase 19 (Map3k19), found in Mus musculus (Mouse).